A 98-amino-acid chain; its full sequence is NADH-ubiquinone oxidoreductase chain 4L (98 aa).

The next 3 membrane-spanning stretches (helical) occupy residues 1–21, 29–49, and 61–81; these read MSLI…GLLM, ALLC…LTIL, and IILL…LVMI.

Belongs to the complex I subunit 4L family. Core subunit of respiratory chain NADH dehydrogenase (Complex I) which is composed of 45 different subunits.

It localises to the mitochondrion inner membrane. The catalysed reaction is a ubiquinone + NADH + 5 H(+)(in) = a ubiquinol + NAD(+) + 4 H(+)(out). In terms of biological role, core subunit of the mitochondrial membrane respiratory chain NADH dehydrogenase (Complex I) which catalyzes electron transfer from NADH through the respiratory chain, using ubiquinone as an electron acceptor. Part of the enzyme membrane arm which is embedded in the lipid bilayer and involved in proton translocation. The sequence is that of NADH-ubiquinone oxidoreductase chain 4L (MT-ND4L) from Berardius bairdii (Baird's beaked whale).